The following is a 219-amino-acid chain: Mucosal pentraxin (219 aa).

The signal sequence occupies residues 1–19 (MEKLIVGTLLLTVLSGGIS). The region spanning 24–219 (DGKAFIFPQE…YVVTKPKLWT (196 aa)) is the Pentraxin (PTX) domain. A disulfide bond links Cys55 and Cys114. Ca(2+)-binding residues include Asp77, Asn78, Glu155, Gln156, Asp157, and Gln167.

It belongs to the pentraxin family. Homopentamer. Pentraxin (or pentaxin) have a discoid arrangement of 5 non-covalently bound subunits. It depends on Ca(2+) as a cofactor. In terms of tissue distribution, expression is restricted to small intestine, stomach and colon. Within colon, expressed in epithelial cells located within the lower to mid region of transverse and distal crypts, but not in proximal colon.

It localises to the secreted. The polypeptide is Mucosal pentraxin (Mptx1) (Rattus norvegicus (Rat)).